A 155-amino-acid chain; its full sequence is 6,7-dimethyl-8-ribityllumazine synthase (155 aa).

5-amino-6-(D-ribitylamino)uracil-binding positions include Trp22, Ser56–Glu58, and Ala80–Ile82. Position 85 to 86 (Ala85 to Thr86) interacts with (2S)-2-hydroxy-3-oxobutyl phosphate. The Proton donor role is filled by His88. Position 113 (Phe113) interacts with 5-amino-6-(D-ribitylamino)uracil. Arg127 serves as a coordination point for (2S)-2-hydroxy-3-oxobutyl phosphate.

The protein belongs to the DMRL synthase family.

It carries out the reaction (2S)-2-hydroxy-3-oxobutyl phosphate + 5-amino-6-(D-ribitylamino)uracil = 6,7-dimethyl-8-(1-D-ribityl)lumazine + phosphate + 2 H2O + H(+). It functions in the pathway cofactor biosynthesis; riboflavin biosynthesis; riboflavin from 2-hydroxy-3-oxobutyl phosphate and 5-amino-6-(D-ribitylamino)uracil: step 1/2. Catalyzes the formation of 6,7-dimethyl-8-ribityllumazine by condensation of 5-amino-6-(D-ribitylamino)uracil with 3,4-dihydroxy-2-butanone 4-phosphate. This is the penultimate step in the biosynthesis of riboflavin. This is 6,7-dimethyl-8-ribityllumazine synthase from Chloroflexus aurantiacus (strain ATCC 29364 / DSM 637 / Y-400-fl).